Here is a 318-residue protein sequence, read N- to C-terminus: 3'-5' exoribonuclease YhaM (318 aa).

The HD domain occupies 163–279; sequence HVVSMLDLAK…LHYIDNLDAK (117 aa).

Belongs to the YhaM family.

In terms of biological role, shows a 3'-5' exoribonuclease activity. This is 3'-5' exoribonuclease YhaM from Bacillus cytotoxicus (strain DSM 22905 / CIP 110041 / 391-98 / NVH 391-98).